A 325-amino-acid polypeptide reads, in one-letter code: NAD kinase (325 aa).

Asp-91 acts as the Proton acceptor in catalysis. Residues 91 to 92 (DG), His-96, 165 to 166 (ND), His-176, His-193, Asp-195, and 206 to 211 (TAYALS) each bind NAD(+).

The protein belongs to the NAD kinase family. A divalent metal cation is required as a cofactor.

It is found in the cytoplasm. The catalysed reaction is NAD(+) + ATP = ADP + NADP(+) + H(+). In terms of biological role, involved in the regulation of the intracellular balance of NAD and NADP, and is a key enzyme in the biosynthesis of NADP. Catalyzes specifically the phosphorylation on 2'-hydroxyl of the adenosine moiety of NAD to yield NADP. The sequence is that of NAD kinase from Psychrobacter arcticus (strain DSM 17307 / VKM B-2377 / 273-4).